A 150-amino-acid polypeptide reads, in one-letter code: Endoribonuclease YbeY (150 aa).

3 residues coordinate Zn(2+): histidine 102, histidine 106, and histidine 112.

It belongs to the endoribonuclease YbeY family. Requires Zn(2+) as cofactor.

The protein localises to the cytoplasm. In terms of biological role, single strand-specific metallo-endoribonuclease involved in late-stage 70S ribosome quality control and in maturation of the 3' terminus of the 16S rRNA. In Thermotoga sp. (strain RQ2), this protein is Endoribonuclease YbeY.